Reading from the N-terminus, the 145-residue chain is Peptide methionine sulfoxide reductase MsrB (145 aa).

Residues 4-127 enclose the MsrB domain; it reads KEELRQRIGD…NSAALKFIPY (124 aa). Cys-116 acts as the Nucleophile in catalysis.

The protein belongs to the MsrB Met sulfoxide reductase family.

The enzyme catalyses L-methionyl-[protein] + [thioredoxin]-disulfide + H2O = L-methionyl-(R)-S-oxide-[protein] + [thioredoxin]-dithiol. The chain is Peptide methionine sulfoxide reductase MsrB from Streptococcus equi subsp. zooepidemicus (strain H70).